The chain runs to 56 residues: Large ribosomal subunit protein uL30 (56 aa).

It belongs to the universal ribosomal protein uL30 family. In terms of assembly, part of the 50S ribosomal subunit.

This is Large ribosomal subunit protein uL30 from Nitratidesulfovibrio vulgaris (strain ATCC 29579 / DSM 644 / CCUG 34227 / NCIMB 8303 / VKM B-1760 / Hildenborough) (Desulfovibrio vulgaris).